Reading from the N-terminus, the 97-residue chain is Probable gamma-secretase subunit PEN-2 (97 aa).

Residues 1–20 (MLIPEDDKLDDEKMINIAKK) are Cytoplasmic-facing. The segment at residues 21–39 (LWFIGFFFLPWVWLINILY) is an intramembrane region (helical). Residues 40 to 55 (FIPYRNSLNDKVKWYL) lie on the Cytoplasmic side of the membrane. A helical transmembrane segment spans residues 56 to 76 (KFSLIGFLGYSTIFMGWMGIY). The Lumenal portion of the chain corresponds to 77-97 (LVNRNKWGAFGDDISITIPFG).

Belongs to the PEN-2 family. In terms of assembly, the functional gamma-secretase complex is composed of at least four polypeptides: a presenilin homodimer, nicastrin, aph1 and psenen.

The protein resides in the endoplasmic reticulum membrane. It localises to the golgi apparatus. Its subcellular location is the golgi stack membrane. The protein localises to the cell membrane. It is found in the membrane. Its function is as follows. Essential subunit of the gamma-secretase complex, an endoprotease complex that catalyzes the intramembrane cleavage of integral membrane proteins such as Notch receptors. The gamma-secretase complex plays a role in Notch and Wnt signaling cascades and regulation of downstream processes via its role in processing key regulatory proteins. The sequence is that of Probable gamma-secretase subunit PEN-2 (psenen) from Dictyostelium discoideum (Social amoeba).